We begin with the raw amino-acid sequence, 758 residues long: Actin filament-associated protein 1-like 1 (758 aa).

The interval 91–194 is disordered; that stretch reads YRDSSENLSC…YESYDEEDEE (104 aa). The segment covering 102–120 has biased composition (pro residues); the sequence is LPPPPSAPPPPLPTTPPPE. Residues 137–148 are compositionally biased toward polar residues; the sequence is YITSRNSSSPPN. The segment covering 177–186 has biased composition (low complexity); the sequence is ESDGLSSSYE. Residues 216–312 enclose the PH 1 domain; it reads DSRICAFLLR…WLRVIKEVIS (97 aa). Positions 335–369 are disordered; that stretch reads SHDKTSDSDSAANGENSSLSSGKENRDTGKCRKGG. Over residues 342–356 the composition is skewed to polar residues; sequence SDSAANGENSSLSSG. Residues 409–503 form the PH 2 domain; that stretch reads EVPCCGYLSV…WLGLLLAQTG (95 aa). A coiled-coil region spans residues 602-690; it reads KTRAEEDARK…TEVKENLKKS (89 aa). Residues 692-758 form a disordered region; the sequence is AGGPTLGLAV…KAKEWEKKKP (67 aa). A compositionally biased stretch (basic and acidic residues) spans 749–758; the sequence is KAKEWEKKKP.

The protein resides in the cytoplasm. The protein localises to the cell projection. It localises to the podosome. Its subcellular location is the invadopodium. It is found in the cytoskeleton. The protein resides in the stress fiber. Functionally, may be involved in podosome and invadosome formation. The polypeptide is Actin filament-associated protein 1-like 1 (afap1l1) (Xenopus tropicalis (Western clawed frog)).